A 463-amino-acid polypeptide reads, in one-letter code: Asparagine--tRNA ligase (463 aa).

This sequence belongs to the class-II aminoacyl-tRNA synthetase family. As to quaternary structure, homodimer.

It is found in the cytoplasm. It carries out the reaction tRNA(Asn) + L-asparagine + ATP = L-asparaginyl-tRNA(Asn) + AMP + diphosphate + H(+). This Clostridium tetani (strain Massachusetts / E88) protein is Asparagine--tRNA ligase.